Consider the following 505-residue polypeptide: Glutamate--tRNA ligase (505 aa).

Residues 12–22 (PSPTGDPHVGT) carry the 'HIGH' region motif. Positions 253–257 (KLSKR) match the 'KMSKS' region motif. Lys256 lines the ATP pocket.

It belongs to the class-I aminoacyl-tRNA synthetase family. Glutamate--tRNA ligase type 1 subfamily. As to quaternary structure, monomer.

The protein resides in the cytoplasm. It carries out the reaction tRNA(Glu) + L-glutamate + ATP = L-glutamyl-tRNA(Glu) + AMP + diphosphate. Catalyzes the attachment of glutamate to tRNA(Glu) in a two-step reaction: glutamate is first activated by ATP to form Glu-AMP and then transferred to the acceptor end of tRNA(Glu). This Chlamydia felis (strain Fe/C-56) (Chlamydophila felis) protein is Glutamate--tRNA ligase.